The sequence spans 935 residues: MKRMLINATQKEELRVALVDGQRLFDLDIESPGHEQKKANIYKGKITRVEPSLEAAFVDYGAERHGFLPLKEIAREYFPDDYVFQGRPNIRDILVEGQEVIVQVNKEERGNKGAALTTFVSLAGSYLVLMPNNPRAGGISRRIEGDERTELKEALSSLDVPDGVGLIVRTAGVGKSPEELQWDLKVLLHHWEAIKQASQSRPAPFLIHQESDVIVRAIRDYLRRDIGEILIDSPKIFEKAKEHIKLVRPDFINRVKLYQGEVPLFSHYQIESQIESAFQREVRLPSGGSIVIDVTEALTAIDINSARSTRGGDIEETALNTNLEAADEIARQLRLRDLGGLVVIDFIDMTPIRHQREVENRIRDAVRPDRARIQISRISRFGLLEMSRQRLSPSLGESSHHICPRCQGTGKVRDNESLSLSILRLLEEEALKENTKQVHTIVPVQIASYLLNEKRKAISNIEKRHNVDIIVAPNEAMETPHFSVFRLRDGEEVNELSYNLAKIHCAQDENTEESLLSRNVETTAVIEQPAVESAVVALSISEAAPTPVERKSNEPSLLAKIIAKIKGLFATKSEENKPKNNRTSRNPNRNQRRSQDRRSSRRPRSENNETERTEEQVRNVRERNQRRPRRNLVEESIAESAVNSTPVFEAKEERTEPVTQRRQRRDLRKRVRVEDNETVVENNFSTTEKMPEVDVITVQNNDEKPVHQNQRSERQERQRRTPRHLRAANNQRRRRDQEPKSPMPLFAAVVSPELASGKAWIDYSTVNLPKENHFLSVDELLEQEKTKKGFITPAMGIVVEEKSPDVKPALDFITQPANESVQKKVQESLDRLSSYKPQEVVESIDPAINVDEPETLEKVSKFVRTYEFNGRLGTISSVPHTKAEMTLAKANDEMPEDFPIRAWQDSRYYFYGKGAAGHHCAISHVYSEPTRTKSE.

The S1 motif domain maps to 39 to 119 (ANIYKGKITR…GNKGAALTTF (81 aa)). Residues Asp-302 and Asp-345 each contribute to the Mg(2+) site. Zn(2+) is bound by residues Cys-403 and Cys-406. Residues 403 to 406 (CPRC) form a required for zinc-mediated homotetramerization and catalytic activity region. Disordered stretches follow at residues 571 to 669 (TKSE…DLRK) and 698 to 743 (VQNN…KSPM). 2 stretches are compositionally biased toward basic and acidic residues: residues 593 to 625 (RSQD…ERNQ) and 701 to 719 (NDEK…ERQR). Residues 720-734 (RTPRHLRAANNQRRR) are compositionally biased toward basic residues.

This sequence belongs to the RNase E/G family. RNase E subfamily. As to quaternary structure, component of the RNA degradosome, which is a multiprotein complex involved in RNA processing and mRNA degradation. Within the RNA degradosome, RNase E assembles into a homotetramer formed by a dimer of dimers. Zn(2+) serves as cofactor. It depends on Mg(2+) as a cofactor.

It localises to the cytoplasm. Its subcellular location is the cell inner membrane. It catalyses the reaction Endonucleolytic cleavage of single-stranded RNA in A- and U-rich regions.. Endoribonuclease that plays a central role in RNA processing and decay. Required for the maturation of 5S and 16S rRNAs and the majority of tRNAs. Also involved in the degradation of most mRNAs. This chain is Ribonuclease E, found in Haemophilus influenzae (strain ATCC 51907 / DSM 11121 / KW20 / Rd).